A 199-amino-acid chain; its full sequence is Protein CPL1 (199 aa).

The signal sequence occupies residues 1–30 (MFSIPPSVRRLVFLFLIAAPLLSIVLPVAA). The tract at residues 34–58 (GVDPPSKLQPRAPQPSRRMGATKRS) is disordered. The N-linked (GlcNAc...) asparagine glycan is linked to asparagine 148.

It localises to the secreted. Its function is as follows. Virulence factor which promotes fungal virulence by enhancing type 2 inflammation in the mouse host. Likely binds mouse Tlr4 independently of Ly96/Md2 and activates Tlr4 signaling to drive Stat3 phosphorylation in interstitial macrophages, which promotes the initial induction of Arg1/arginase-1 and increases macrophage sensitivity to Il4 signaling. In Cryptococcus neoformans var. grubii serotype A (strain H99 / ATCC 208821 / CBS 10515 / FGSC 9487) (Filobasidiella neoformans var. grubii), this protein is Protein CPL1.